The chain runs to 37 residues: Large ribosomal subunit protein bL36 (37 aa).

This sequence belongs to the bacterial ribosomal protein bL36 family.

The chain is Large ribosomal subunit protein bL36 (rpmJ) from Mycobacterium tuberculosis (strain ATCC 25618 / H37Rv).